A 743-amino-acid polypeptide reads, in one-letter code: Phenylalanine ammonia-lyase 1 (743 aa).

Tyr-120 acts as the Proton donor/acceptor in catalysis. The segment at residues 224–226 (ASG) is a cross-link (5-imidazolinone (Ala-Gly)). Ser-225 carries the post-translational modification 2,3-didehydroalanine (Ser). The (E)-cinnamate site is built by Asn-287, Gln-377, Arg-383, Asn-413, Lys-484, Glu-512, and Asn-515.

It belongs to the PAL/histidase family. Homotetramer. Post-translationally, contains an active site 4-methylidene-imidazol-5-one (MIO), which is formed autocatalytically by cyclization and dehydration of residues Ala-Ser-Gly.

The protein resides in the cytoplasm. It carries out the reaction L-phenylalanine = (E)-cinnamate + NH4(+). It participates in phenylpropanoid metabolism; trans-cinnamate biosynthesis; trans-cinnamate from L-phenylalanine: step 1/1. Functionally, catalyzes the non-oxidative deamination of L-phenylalanine to form trans-cinnamic acid and a free ammonium ion. Facilitates the commitment step in phenylpropanoid pathways that produce secondary metabolites such as lignins, coumarins and flavonoids. The sequence is that of Phenylalanine ammonia-lyase 1 from Pleurotus ostreatus (Oyster mushroom).